The following is a 490-amino-acid chain: GTPase Der (490 aa).

2 consecutive EngA-type G domains span residues 3 to 166 and 203 to 376; these read PVVA…MDDV and IKLA…DSST. Residues 9-16, 56-60, 118-121, 209-216, 256-260, and 321-324 contribute to the GTP site; these read GRPNVGKS, DTGGI, NKTD, DTAGV, and NKWD. The 85-residue stretch at 377–461 folds into the KH-like domain; it reads RRVSTAMLTR…PIRIQFKEGE (85 aa).

The protein belongs to the TRAFAC class TrmE-Era-EngA-EngB-Septin-like GTPase superfamily. EngA (Der) GTPase family. As to quaternary structure, associates with the 50S ribosomal subunit.

In terms of biological role, GTPase that plays an essential role in the late steps of ribosome biogenesis. This chain is GTPase Der, found in Salmonella newport (strain SL254).